Consider the following 130-residue polypeptide: Small ribosomal subunit protein uS9 (130 aa).

This sequence belongs to the universal ribosomal protein uS9 family.

The polypeptide is Small ribosomal subunit protein uS9 (Geotalea uraniireducens (strain Rf4) (Geobacter uraniireducens)).